The sequence spans 54 residues: U7-ctenitoxin-Pk1a (54 aa).

Disulfide bonds link C3/C17, C10/C23, C14/C52, C16/C37, and C25/C35.

As to expression, expressed by the venom gland.

Its subcellular location is the secreted. Its function is as follows. Blocks voltage-gated sodium channels (Nav). Causes immediate spastic paralysis and death in mice within 1 minute of injection at dose levels of 1.5 ug per mouse. This Phoneutria keyserlingi (Brazilian wandering spider) protein is U7-ctenitoxin-Pk1a.